The chain runs to 346 residues: Histidinol-phosphate aminotransferase (346 aa).

At Lys-209 the chain carries N6-(pyridoxal phosphate)lysine.

Belongs to the class-II pyridoxal-phosphate-dependent aminotransferase family. Histidinol-phosphate aminotransferase subfamily. In terms of assembly, homodimer. It depends on pyridoxal 5'-phosphate as a cofactor.

The catalysed reaction is L-histidinol phosphate + 2-oxoglutarate = 3-(imidazol-4-yl)-2-oxopropyl phosphate + L-glutamate. The protein operates within amino-acid biosynthesis; L-histidine biosynthesis; L-histidine from 5-phospho-alpha-D-ribose 1-diphosphate: step 7/9. This chain is Histidinol-phosphate aminotransferase, found in Vibrio parahaemolyticus serotype O3:K6 (strain RIMD 2210633).